Here is a 73-residue protein sequence, read N- to C-terminus: MCLPKNPHPPVTTYTSVRILSINYIRPKLYFHFLLYYTIIKTNKYTNIIRNLEHVIKVLPFLLTACSCNCRLE.

This is an uncharacterized protein from Vertebrata (FPV).